The following is a 286-amino-acid chain: Phosphatidylserine decarboxylase proenzyme (286 aa).

Residues Asp-89, His-146, and Ser-252 each act as charge relay system; for autoendoproteolytic cleavage activity in the active site. Ser-252 functions as the Schiff-base intermediate with substrate; via pyruvic acid; for decarboxylase activity in the catalytic mechanism. Ser-252 carries the pyruvic acid (Ser); by autocatalysis modification.

This sequence belongs to the phosphatidylserine decarboxylase family. PSD-B subfamily. Prokaryotic type I sub-subfamily. Heterodimer of a large membrane-associated beta subunit and a small pyruvoyl-containing alpha subunit. Pyruvate serves as cofactor. In terms of processing, is synthesized initially as an inactive proenzyme. Formation of the active enzyme involves a self-maturation process in which the active site pyruvoyl group is generated from an internal serine residue via an autocatalytic post-translational modification. Two non-identical subunits are generated from the proenzyme in this reaction, and the pyruvate is formed at the N-terminus of the alpha chain, which is derived from the carboxyl end of the proenzyme. The autoendoproteolytic cleavage occurs by a canonical serine protease mechanism, in which the side chain hydroxyl group of the serine supplies its oxygen atom to form the C-terminus of the beta chain, while the remainder of the serine residue undergoes an oxidative deamination to produce ammonia and the pyruvoyl prosthetic group on the alpha chain. During this reaction, the Ser that is part of the protease active site of the proenzyme becomes the pyruvoyl prosthetic group, which constitutes an essential element of the active site of the mature decarboxylase.

It is found in the cell membrane. It carries out the reaction a 1,2-diacyl-sn-glycero-3-phospho-L-serine + H(+) = a 1,2-diacyl-sn-glycero-3-phosphoethanolamine + CO2. It participates in phospholipid metabolism; phosphatidylethanolamine biosynthesis; phosphatidylethanolamine from CDP-diacylglycerol: step 2/2. Its function is as follows. Catalyzes the formation of phosphatidylethanolamine (PtdEtn) from phosphatidylserine (PtdSer). The chain is Phosphatidylserine decarboxylase proenzyme from Shewanella loihica (strain ATCC BAA-1088 / PV-4).